We begin with the raw amino-acid sequence, 601 residues long: Glutathione-regulated potassium-efflux system protein KefB (601 aa).

Transmembrane regions (helical) follow at residues 4–24 (SDLL…VPLA), 29–49 (IGAV…GLGF), 55–75 (EILH…GLEL), 87–107 (IFGV…GLLM), 115–135 (AAVV…LQLM), 152–172 (VLLF…LLAG), 177–197 (HVNW…LIGG), 207–227 (FIAS…LVLG), 230–250 (LFME…GVLL), 268–288 (GLLL…GVLY), 291–311 (LLWV…VLYL), 326–346 (FAGV…LPAS), and 356–376 (ALLL…MKGI). An RCK N-terminal domain is found at 400-519 (KPQVIIVGFG…AGVTQFSRET (120 aa)).

Belongs to the monovalent cation:proton antiporter 2 (CPA2) transporter (TC 2.A.37) family. KefB subfamily. Interacts with the regulatory subunit KefG.

Its subcellular location is the cell inner membrane. In terms of biological role, pore-forming subunit of a potassium efflux system that confers protection against electrophiles. Catalyzes K(+)/H(+) antiport. The polypeptide is Glutathione-regulated potassium-efflux system protein KefB (Klebsiella pneumoniae subsp. pneumoniae (strain ATCC 700721 / MGH 78578)).